The sequence spans 358 residues: Methylthioribose-1-phosphate isomerase (358 aa).

Residues 54–56 (RGA), Arg-96, and Gln-205 each bind substrate. Asp-246 serves as the catalytic Proton donor. 256–257 (NK) contacts substrate.

This sequence belongs to the eIF-2B alpha/beta/delta subunits family. MtnA subfamily.

It carries out the reaction 5-(methylsulfanyl)-alpha-D-ribose 1-phosphate = 5-(methylsulfanyl)-D-ribulose 1-phosphate. It functions in the pathway amino-acid biosynthesis; L-methionine biosynthesis via salvage pathway; L-methionine from S-methyl-5-thio-alpha-D-ribose 1-phosphate: step 1/6. Functionally, catalyzes the interconversion of methylthioribose-1-phosphate (MTR-1-P) into methylthioribulose-1-phosphate (MTRu-1-P). The sequence is that of Methylthioribose-1-phosphate isomerase from Pseudomonas savastanoi pv. phaseolicola (strain 1448A / Race 6) (Pseudomonas syringae pv. phaseolicola (strain 1448A / Race 6)).